The following is a 413-amino-acid chain: Glucose-1-phosphate adenylyltransferase (413 aa).

Residues tyrosine 102, glycine 167, 182–183 (EK), and serine 200 contribute to the alpha-D-glucose 1-phosphate site.

Belongs to the bacterial/plant glucose-1-phosphate adenylyltransferase family. Homotetramer.

The enzyme catalyses alpha-D-glucose 1-phosphate + ATP + H(+) = ADP-alpha-D-glucose + diphosphate. The protein operates within glycan biosynthesis; glycogen biosynthesis. Functionally, involved in the biosynthesis of ADP-glucose, a building block required for the elongation reactions to produce glycogen. Catalyzes the reaction between ATP and alpha-D-glucose 1-phosphate (G1P) to produce pyrophosphate and ADP-Glc. This is Glucose-1-phosphate adenylyltransferase from Deinococcus deserti (strain DSM 17065 / CIP 109153 / LMG 22923 / VCD115).